The chain runs to 761 residues: Zinc finger protein 711 (761 aa).

Residues Lys-224, Lys-235, and Lys-296 each participate in a glycyl lysine isopeptide (Lys-Gly) (interchain with G-Cter in SUMO2) cross-link. 5 C2H2-type zinc fingers span residues 383-408 (YPCH…HPDH), 414-436 (YQCT…LESH), 476-499 (HKCK…LAVH), 505-527 (HVCV…MRTH), and 533-556 (YQCQ…KSKH). The C2H2-type 6; atypical zinc finger occupies 562–584 (YKCEHCPQAFGDERELQRHLDLF). Residues Cys-564, Cys-567, and His-580 each coordinate Zn(2+). 6 consecutive C2H2-type zinc fingers follow at residues 590–613 (HQCP…ISVH), 619–641 (HKCE…SDIH), 647–670 (HQCR…LSVH), 676–698 (LKCK…MKTH), 704–727 (YQCE…ISIH), and 733–755 (HRCE…IMRH).

This sequence belongs to the krueppel C2H2-type zinc-finger protein family. In terms of assembly, interacts with PHF8.

The protein localises to the nucleus. Functionally, transcription regulator required for brain development. Probably acts as a transcription factor that binds to the promoter of target genes and recruits PHF8 histone demethylase, leading to activated expression of genes involved in neuron development, such as KDM5C. May compete with transcription factor ARX for activation of expression of KDM5C. This is Zinc finger protein 711 (Znf711) from Mus musculus (Mouse).